The following is a 383-amino-acid chain: Na(+)/H(+) antiporter NhaA (383 aa).

A run of 11 helical transmembrane segments spans residues 10–30, 56–76, 91–111, 121–141, 150–170, 174–194, 206–226, 254–274, 289–308, 327–347, and 355–375; these read LIGG…NNSP, LMHW…GLEI, IITP…IYLS, GWAI…ALLG, LLVI…IAIF, SLSL…IICN, VVLG…ATLA, PWII…ISFS, IIWG…LAVF, GISL…VLAF, and AIKI…YIVL.

The protein belongs to the NhaA Na(+)/H(+) (TC 2.A.33) antiporter family.

The protein resides in the cell inner membrane. The catalysed reaction is Na(+)(in) + 2 H(+)(out) = Na(+)(out) + 2 H(+)(in). Functionally, na(+)/H(+) antiporter that extrudes sodium in exchange for external protons. The sequence is that of Na(+)/H(+) antiporter NhaA from Francisella tularensis subsp. holarctica (strain FTNF002-00 / FTA).